Here is a 285-residue protein sequence, read N- to C-terminus: ATP synthase gamma chain (285 aa).

The protein belongs to the ATPase gamma chain family. F-type ATPases have 2 components, CF(1) - the catalytic core - and CF(0) - the membrane proton channel. CF(1) has five subunits: alpha(3), beta(3), gamma(1), delta(1), epsilon(1). CF(0) has three main subunits: a, b and c.

It localises to the cell membrane. In terms of biological role, produces ATP from ADP in the presence of a proton gradient across the membrane. The gamma chain is believed to be important in regulating ATPase activity and the flow of protons through the CF(0) complex. This is ATP synthase gamma chain from Clostridium novyi (strain NT).